The chain runs to 254 residues: MSQVRTVSDTKRDFYTHHTRPINSIFRRVVEELLVEMHLLSVNADFRYDPFYALGVVTSFERFMQGYRPEADKVSIFQSMCQAIGGDANRYKEDAMALVELAKRCSGTQLIECFRQDVPPEGAQELWEKIEAIAKNDHFKYSRLFAIGVYTFLGESEPQLLEDTEKRDEMLTTVTAGLNLPEEKMKKDLDLYRSNLEKMNQVLEVLEDALAVERQRREKAEAEAKAKTAEATVATETNDEQDEQKETSESGSDA.

A coiled-coil region spans residues 182–241 (EEKMKKDLDLYRSNLEKMNQVLEVLEDALAVERQRREKAEAEAKAKTAEATVATETNDEQ). Residues 215-228 (QRREKAEAEAKAKT) are compositionally biased toward basic and acidic residues. The segment at 215 to 254 (QRREKAEAEAKAKTAEATVATETNDEQDEQKETSESGSDA) is disordered.

It belongs to the THF1 family.

Functionally, may be involved in photosynthetic membrane biogenesis. The protein is Protein Thf1 of Picosynechococcus sp. (strain ATCC 27264 / PCC 7002 / PR-6) (Agmenellum quadruplicatum).